The chain runs to 198 residues: Glycerol-3-phosphate acyltransferase (198 aa).

The next 4 helical transmembrane spans lie at 4–24, 71–91, 113–133, and 147–167; these read TYLLFIVAYLLGSIPFALVVG, LPMIFGLDIHPLWFGLAAVLG, LLCYSPVVFAILAVVFFTLLF, and VVAVIASIVSGDKIFIIAMCL.

Belongs to the PlsY family. In terms of assembly, probably interacts with PlsX.

The protein resides in the cell membrane. It carries out the reaction an acyl phosphate + sn-glycerol 3-phosphate = a 1-acyl-sn-glycero-3-phosphate + phosphate. It participates in lipid metabolism; phospholipid metabolism. Catalyzes the transfer of an acyl group from acyl-phosphate (acyl-PO(4)) to glycerol-3-phosphate (G3P) to form lysophosphatidic acid (LPA). This enzyme utilizes acyl-phosphate as fatty acyl donor, but not acyl-CoA or acyl-ACP. The polypeptide is Glycerol-3-phosphate acyltransferase (Bacillus cereus (strain G9842)).